A 115-amino-acid chain; its full sequence is Large ribosomal subunit protein bL19 (115 aa).

This sequence belongs to the bacterial ribosomal protein bL19 family.

Its function is as follows. This protein is located at the 30S-50S ribosomal subunit interface and may play a role in the structure and function of the aminoacyl-tRNA binding site. The chain is Large ribosomal subunit protein bL19 from Enterobacter sp. (strain 638).